Here is a 586-residue protein sequence, read N- to C-terminus: Thioredoxin domain-containing protein 3 (586 aa).

Positions 10–116 (LQSVVNSQNL…NRKVITLIDE (107 aa)) constitute a Thioredoxin domain. C39 and C42 are oxidised to a cystine. NDK regions lie at residues 157–254 (MAII…VLEE), 312–452 (VQTT…STLA), and 453–586 (LIKP…NPEN).

In the C-terminal section; belongs to the NDK family. Monomer. Testis-specific. Expressed mainly in round spermatids.

It localises to the cytoplasm. Probably required during the final stages of sperm tail maturation in the testis and/or epididymis, where extensive disulfide bonding of fibrous sheath (FS) proteins occurs. In vitro, it has neither nucleoside diphosphate kinase (NDPK) activity nor reducing activity on disulfide bonds. Exhibits a 3'-5' exonuclease activity with a preference for single-stranded DNA, suggesting roles in DNA proofreading and repair. The chain is Thioredoxin domain-containing protein 3 (Nme8) from Mus musculus (Mouse).